Reading from the N-terminus, the 261-residue chain is WW domain-binding protein 2 (261 aa).

In terms of domain architecture, GRAM spans M1–Q84. The residue at position 192 (Y192) is a Phosphotyrosine; by YES and SRC. Residues P196–Y200 carry the PPxY motif 1 motif. Positions P196–S209 are enriched in pro residues. The disordered stretch occupies residues P196–Q261. Low complexity predominate over residues A218–A230. At Y231 the chain carries Phosphotyrosine; by YES and SRC. A compositionally biased stretch (pro residues) spans S245 to P254. Residues P248–Y252 carry the PPxY motif 2 motif.

Binds to the WW domain of YAP1, WWP1 and WWP2. Interacts with NEDD4. Interacts with ESR1 and UBE3A. Phosphorylated in repsonse to EGF as well as estrogen and progesterone hormones. Tyr-192 and Tyr-231 are phosphorylated by YES and SRC inducing nuclear translocation. In terms of tissue distribution, ubiquitous.

It is found in the cytoplasm. It localises to the nucleus. Its function is as follows. Acts as a transcriptional coactivator of estrogen and progesterone receptors (ESR1 and PGR) upon hormone activation. In presence of estrogen, binds to ESR1-responsive promoters. Synergizes with YAP1 to enhance PGR activity. Modulates expression of post-synaptic scaffolding proteins via regulation of ESR1, ESR2 and PGR. The sequence is that of WW domain-binding protein 2 from Homo sapiens (Human).